Consider the following 195-residue polypeptide: dCTP deaminase (195 aa).

Residues 105–110 (RSSLGR), aspartate 123, 131–133 (TLE), glutamine 152, tyrosine 166, lysine 173, and glutamine 177 each bind dCTP. Glutamate 133 functions as the Proton donor/acceptor in the catalytic mechanism. Positions 159–195 (KTPADRPYGAERGSKYQGQSGPQASKIQGDREFGGDQ) are disordered. Residues 160-172 (TPADRPYGAERGS) are compositionally biased toward basic and acidic residues. Polar residues predominate over residues 174–184 (YQGQSGPQASK). Positions 186–195 (QGDREFGGDQ) are enriched in basic and acidic residues.

It belongs to the dCTP deaminase family. Homotrimer.

It catalyses the reaction dCTP + H2O + H(+) = dUTP + NH4(+). It participates in pyrimidine metabolism; dUMP biosynthesis; dUMP from dCTP (dUTP route): step 1/2. Its function is as follows. Catalyzes the deamination of dCTP to dUTP. The chain is dCTP deaminase from Haloarcula marismortui (strain ATCC 43049 / DSM 3752 / JCM 8966 / VKM B-1809) (Halobacterium marismortui).